The primary structure comprises 433 residues: Trigger factor (433 aa).

Residues 163 to 248 (GDTVNIDFSG…VNEIKFKEVP (86 aa)) form the PPIase FKBP-type domain.

This sequence belongs to the FKBP-type PPIase family. Tig subfamily.

Its subcellular location is the cytoplasm. It carries out the reaction [protein]-peptidylproline (omega=180) = [protein]-peptidylproline (omega=0). Its function is as follows. Involved in protein export. Acts as a chaperone by maintaining the newly synthesized protein in an open conformation. Functions as a peptidyl-prolyl cis-trans isomerase. The sequence is that of Trigger factor from Staphylococcus aureus (strain Newman).